A 171-amino-acid chain; its full sequence is Peptide deformylase 1 (171 aa).

Residues Cys99 and His141 each contribute to the Fe cation site. The active site involves Glu142. His145 lines the Fe cation pocket.

This sequence belongs to the polypeptide deformylase family. Fe(2+) is required as a cofactor.

The catalysed reaction is N-terminal N-formyl-L-methionyl-[peptide] + H2O = N-terminal L-methionyl-[peptide] + formate. Functionally, removes the formyl group from the N-terminal Met of newly synthesized proteins. Requires at least a dipeptide for an efficient rate of reaction. N-terminal L-methionine is a prerequisite for activity but the enzyme has broad specificity at other positions. The sequence is that of Peptide deformylase 1 from Xanthomonas campestris pv. campestris (strain ATCC 33913 / DSM 3586 / NCPPB 528 / LMG 568 / P 25).